Reading from the N-terminus, the 519-residue chain is MAASFLTMDNSRTRQNMNGSANWSQQSGRTSTSSLEDLEIPKFRSFAPSSISISPSLVSPSTCFSPSLFLDSPAFVSSSANVLASPTTGALITNVTNQKGINEGDKSNNNNFNLFDFSFHTQSSGVSAPTTTTTTTTTTTTTNSSIFQSQEQQKKNQSEQWSQTETRPNNQAVSYNGREQRKGEDGYNWRKYGQKQVKGSENPRSYYKCTFPNCPTKKKVERSLEGQITEIVYKGSHNHPKPQSTRRSSSSSSTFHSAVYNASLDHNRQASSDQPNSNNSFHQSDSFGMQQEDNTTSDSVGDDEFEQGSSIVSRDEEDCGSEPEAKRWKGDNETNGGNGGGSKTVREPRIVVQTTSDIDILDDGYRWRKYGQKVVKGNPNPRSYYKCTTIGCPVRKHVERASHDMRAVITTYEGKHNHDVPAARGSGYATNRAPQDSSSVPIRPAAIAGHSNYTTSSQAPYTLQMLHNNNTNTGPFGYAMNNNNNNSNLQTQQNFVGGGFSRAKEEPNEETSFFDSFMP.

Disordered stretches follow at residues 1-34 and 123-212; these read MAASFLTMDNSRTRQNMNGSANWSQQSGRTSTSS and SSGV…CTFP. Positions 7–34 are enriched in polar residues; sequence TMDNSRTRQNMNGSANWSQQSGRTSTSS. A compositionally biased stretch (low complexity) spans 130-142; the sequence is TTTTTTTTTTTTT. The span at 164–174 shows a compositional bias: polar residues; sequence TETRPNNQAVS. Basic and acidic residues predominate over residues 178 to 188; sequence REQRKGEDGYN. Positions 178–242 form a DNA-binding region, WRKY 1; sequence REQRKGEDGY…YKGSHNHPKP (65 aa). Residues Cys209, Cys214, His237, and His239 each coordinate Zn(2+). Disordered stretches follow at residues 232-255 and 267-349; these read VYKGSHNHPKPQSTRRSSSSSSTF and NRQA…REPR. Over residues 245–254 the composition is skewed to low complexity; it reads TRRSSSSSST. Polar residues predominate over residues 269–299; the sequence is QASSDQPNSNNSFHQSDSFGMQQEDNTTSDS. Residues 323 to 332 are compositionally biased toward basic and acidic residues; sequence PEAKRWKGDN. Residues 356 to 421 constitute a DNA-binding region (WRKY 2); that stretch reads SDIDILDDGY…YEGKHNHDVP (66 aa). The Zn(2+) site is built by Cys387, Cys392, His416, and His418.

This sequence belongs to the WRKY group I family. In terms of assembly, interacts with MKS1. Interacts with ATG18A. Interacts with SIB1 and SIB2. Interacts with VQ1 and VQ10. Phosphorylated by MPK4. Phosphorylated on serine residues by MPK3 and MPK6 following infection with the necrotrophic fungal pathogen B.cinerea. In terms of tissue distribution, highly expressed in roots, leaves and flowers, and at lower levels in stems, siliques and seeds.

It is found in the nucleus. Its function is as follows. Transcription factor. Interacts specifically with the W box (5'-TTGAC[CT]-3'), a frequently occurring elicitor-responsive cis-acting element. Involved in defense responses. Required for resistance to the necrotrophic fungal pathogen B.cinerea. Regulates the antagonistic relationship between defense pathways mediating responses to the bacterial pathogen P. syringae and the necrotrophic pathogen B.cinerea. Required for the phytoalexin camalexin synthesis following infection with B.cinerea. Acts as a positive regulator of the camalexin biosynthetic genes PAD3 (CYP71B15) and CYP71A13 by binding to their promoters. Acts downstream of MPK3 and MPK6 in reprogramming the expression of camalexin biosynthetic genes, which drives the metabolic flow to camalexin production. Functions with WRKY25 as positive regulator of salt stress response and abscisic acid (ABA) signaling. Functions with WRKY25 and WRKY26 as positive regulator of plant thermotolerance by partially participating in ethylene-response signal transduction pathway. The DNA-binding activity of WRKY33 is increased by SIB1 and SIB2. The chain is Probable WRKY transcription factor 33 (WRKY33) from Arabidopsis thaliana (Mouse-ear cress).